A 399-amino-acid chain; its full sequence is Elongation factor Tu (399 aa).

The tr-type G domain occupies lysine 10 to valine 209. Residues glycine 19–threonine 26 are G1. Glycine 19–threonine 26 is a GTP binding site. Position 26 (threonine 26) interacts with Mg(2+). The segment at glycine 60–alanine 64 is G2. The interval aspartate 81–glycine 84 is G3. Residues aspartate 81 to histidine 85 and asparagine 136 to aspartate 139 each bind GTP. The tract at residues asparagine 136 to aspartate 139 is G4. Residues serine 174–leucine 176 form a G5 region.

It belongs to the TRAFAC class translation factor GTPase superfamily. Classic translation factor GTPase family. EF-Tu/EF-1A subfamily. In terms of assembly, monomer.

It localises to the cytoplasm. It catalyses the reaction GTP + H2O = GDP + phosphate + H(+). Functionally, GTP hydrolase that promotes the GTP-dependent binding of aminoacyl-tRNA to the A-site of ribosomes during protein biosynthesis. The protein is Elongation factor Tu of Campylobacter fetus subsp. fetus (strain 82-40).